A 927-amino-acid polypeptide reads, in one-letter code: MDLKPNIRRKEKRNLLKGEAALEKKGSIDRKTKNKAYPSTTHDPHQNDDSNIPGLGSGLLERIKDIVQRPTDTQLKGQDSNHKKASLTETKTEKAKVKPKAKKKNSKEKISKSSKQDEHKTDVHKESVSKLSKNLESRNNRDENSAKREKNNSHQVEADTNNATEMVSSNAKKSVYPLYYDSATVKKGLKSGTLFKGTLRILENHRSAFACMEDIPDFYVDGPIARNRAFHNDVVIVEPVMNNDSPTEKSNFLQNGVEKVKIKDHDDELGGAMEHLERLEIKSVASFKGDSRTRARVVAIEKRAEISKIVGILRAPGWSLKNVEYVSKKSSYAIFIPKDKRLPFITIHKNDLSDLSGENWIENILKHHDQLFSVEITRWSIYSRYPMGVLGEKLGNITDVEAYTNALLLENGISSSPFSDEVLNCLPPDDWIISHEEIKKRRDLRNELIITIDPETARDLDDAVSCRALDNGTYEVGVHIADVTHFVKPDSALDKEAASRATTVYLVQKAIPMLPPLLCERLCSLNPNVERLAFSVFWKLDSNGKEIGKRWFGKTVIKTCARLAYSEAQGVIEGKSWDDAVGKPIGGTHTPKDVETSILTLCEISRKLRKDRFAKGAVEINSTELKFQLDEYGMPNKCEVYEQTDANHLIEEFMLLANRSVAEHISKNFSNNSLLRRHASPKEKQINEFCHFLKSMNFDFDASSSAAFNASMVRLRSTFNEELVELFENMAVRSLNRAEYFCTGDFGEKTDWHHYALSFNHYTHFTSPIRRYPDIIVHRLLERSLKNTSPGIDKKNCSLVAAHCNEKKEKSTTVQEDSQQLFLSVYIAEYCKKHDKKSMPVQAFATRISGNSIDVYISEYGISNRVDLSSDDRIKSFIVAPDDSSVKITLFDDSQKTIALTDRFQVYLYSDYSRTFFSIRCSLVSLN.

Positions 1 to 12 (MDLKPNIRRKEK) are enriched in basic residues. Positions 1–168 (MDLKPNIRRK…DTNNATEMVS (168 aa)) are disordered. Over residues 13–31 (RNLLKGEAALEKKGSIDRK) the composition is skewed to basic and acidic residues. Residues 97–106 (VKPKAKKKNS) are compositionally biased toward basic residues. Residues 107-152 (KEKISKSSKQDEHKTDVHKESVSKLSKNLESRNNRDENSAKREKNN) show a composition bias toward basic and acidic residues. Polar residues predominate over residues 153 to 168 (SHQVEADTNNATEMVS). Asp453 and Asp462 together coordinate Mg(2+).

Belongs to the RNR ribonuclease family. DIS3L2 subfamily. Requires Mg(2+) as cofactor. It depends on Mn(2+) as a cofactor.

The protein resides in the cytoplasm. It localises to the P-body. Functionally, 3'-5'-exoribonuclease that specifically recognizes RNAs polyuridylated at their 3' end and mediates their degradation. Component of an exosome-independent RNA degradation pathway that mediates degradation of cytoplasmic mRNAs that have been deadenylated and subsequently uridylated at their 3'. This chain is DIS3-like exonuclease 2 (dis32), found in Schizosaccharomyces pombe (strain 972 / ATCC 24843) (Fission yeast).